The primary structure comprises 551 residues: Protein MTL1 (551 aa).

Positions 1–35 are cleaved as a signal peptide; sequence MASCNPTRKKSSASSLSMWRTILMALTTLPLSVLS. Topologically, residues 36–361 are extracellular; that stretch reads QELVPANSTT…HSGLSKKNRN (326 aa). Disordered stretches follow at residues 108–143, 206–227, and 243–263; these read MQVS…IISS, PSSS…SYSS, and SSSS…SSSS. A helical transmembrane segment spans residues 362–382; it reads IIIGCVVGIGAPLILILLILI. Residues 383–551 lie on the Cytoplasmic side of the membrane; it reads YMFCVQPKKT…PNNGLNITNY (169 aa). The disordered stretch occupies residues 429 to 513; it reads SSDSPIGSNN…SNSNSQDYND (85 aa). Residues 430–441 are compositionally biased toward polar residues; it reads SDSPIGSNNIQN. Residues 466-477 are compositionally biased toward acidic residues; the sequence is GYDDDDDDDAND. A phosphoserine mark is found at serine 481 and serine 482. A compositionally biased stretch (low complexity) spans 498–508; the sequence is SASYSMSNSNS.

It belongs to the MID2 like cell wall stress sensor family.

The protein localises to the membrane. Involved in cell integrity signaling during vegetative growth at elevated temperature. Acts positively on the PKC1-MAPK pathway. Cell membrane sensor of oxidative stress in the cell integrity pathway upstream of PKC1. Required to transmit the oxidative signal to SLT2 and to restore the correct actin organization following oxidative stress. Multicopy suppressor of 1,3-beta-glucan synthase (GS) mutation. Also suppresses RGD1 null mutations. This is Protein MTL1 (MTL1) from Saccharomyces cerevisiae (strain ATCC 204508 / S288c) (Baker's yeast).